Reading from the N-terminus, the 50-residue chain is Sperm protamine P1 (50 aa).

2 disulfide bridges follow: Cys7–Cys15 and Cys38–Cys46.

The protein belongs to the protamine P1 family. Cross-linked by interchain disulfide bonds around the DNA-helix. In terms of tissue distribution, testis.

Its subcellular location is the nucleus. The protein resides in the chromosome. Its function is as follows. Protamines substitute for histones in the chromatin of sperm during the haploid phase of spermatogenesis. They compact sperm DNA into a highly condensed, stable and inactive complex. The polypeptide is Sperm protamine P1 (PRM1) (Equus asinus (Donkey)).